The chain runs to 294 residues: Elongation factor Ts (294 aa).

The involved in Mg(2+) ion dislocation from EF-Tu stretch occupies residues threonine 79–valine 82.

Belongs to the EF-Ts family.

It is found in the cytoplasm. Functionally, associates with the EF-Tu.GDP complex and induces the exchange of GDP to GTP. It remains bound to the aminoacyl-tRNA.EF-Tu.GTP complex up to the GTP hydrolysis stage on the ribosome. This is Elongation factor Ts from Shouchella clausii (strain KSM-K16) (Alkalihalobacillus clausii).